The chain runs to 92 residues: Probable Fe(2+)-trafficking protein (92 aa).

Belongs to the Fe(2+)-trafficking protein family.

Could be a mediator in iron transactions between iron acquisition and iron-requiring processes, such as synthesis and/or repair of Fe-S clusters in biosynthetic enzymes. This Shewanella sp. (strain W3-18-1) protein is Probable Fe(2+)-trafficking protein.